A 378-amino-acid chain; its full sequence is Small RNA 2'-O-methyltransferase (378 aa).

D61 contacts S-adenosyl-L-methionine. Residues E114, E117, H118, and H176 each coordinate Mg(2+).

Belongs to the methyltransferase superfamily. HEN1 family. Requires Mg(2+) as cofactor.

It is found in the cytoplasm. It catalyses the reaction small RNA 3'-end nucleotide + S-adenosyl-L-methionine = small RNA 3'-end 2'-O-methylnucleotide + S-adenosyl-L-homocysteine + H(+). In terms of biological role, methyltransferase that adds a 2'-O-methyl group at the 3'-end of small RNAs. In Schizosaccharomyces pombe (strain 972 / ATCC 24843) (Fission yeast), this protein is Small RNA 2'-O-methyltransferase.